The primary structure comprises 285 residues: NAD kinase (285 aa).

Aspartate 67 functions as the Proton acceptor in the catalytic mechanism. NAD(+) is bound by residues 67 to 68 (DG), 141 to 142 (ND), arginine 152, lysine 169, aspartate 171, 182 to 187 (TGYSLS), and glutamine 242.

Belongs to the NAD kinase family. It depends on a divalent metal cation as a cofactor.

It is found in the cytoplasm. It catalyses the reaction NAD(+) + ATP = ADP + NADP(+) + H(+). Functionally, involved in the regulation of the intracellular balance of NAD and NADP, and is a key enzyme in the biosynthesis of NADP. Catalyzes specifically the phosphorylation on 2'-hydroxyl of the adenosine moiety of NAD to yield NADP. This Trichlorobacter lovleyi (strain ATCC BAA-1151 / DSM 17278 / SZ) (Geobacter lovleyi) protein is NAD kinase.